The chain runs to 119 residues: uncharacterized protein (119 aa).

This is an uncharacterized protein from Aquifex aeolicus (strain VF5).